The sequence spans 345 residues: MSNMMKALVKSKPEVGLWMEHVPVPEVGPNDVLIRVRKSAICGTDVHIWNWDQWAQKTIPVPMVVGHEFCGEIAEIGSAVTKYHVGERVSGEGHIVCGKCRNCRAGRGHLCRNTLGVGVNRPGSFGEFVCIPESNVVPIPDDIPDEVAAIFDPFGNAVHTALSFDLVGEDVLVTGAGPIGIMGAMVAKRSGARKVVITDINPNRLALAHKLGIDHVVDASKENLADVMKSIGMTEGFDVGLEMSGAAPAFRDMIDKMNNGGKIAILGIAPAGFEIDWNKVIFKMLNLKGIYGREMFETWYKMIAFVQGGLDVSPVITHRIGIDDFREGFEAMRSGNSGKVVMDWF.

Residue C42 participates in Zn(2+) binding. Catalysis depends on charge relay system residues T44 and H47. Residues H67, E68, C97, C100, C103, and C111 each coordinate Zn(2+). NAD(+) contacts are provided by residues I179, D199, R204, 266 to 268 (LGI), and 290 to 291 (IY).

It belongs to the zinc-containing alcohol dehydrogenase family. In terms of assembly, homotetramer. The cofactor is Zn(2+).

The protein resides in the cytoplasm. The catalysed reaction is L-threonine + NAD(+) = (2S)-2-amino-3-oxobutanoate + NADH + H(+). It participates in amino-acid degradation; L-threonine degradation via oxydo-reductase pathway; glycine from L-threonine: step 1/2. Catalyzes the NAD(+)-dependent oxidation of L-threonine to 2-amino-3-ketobutyrate. The chain is L-threonine 3-dehydrogenase from Rhizobium rhizogenes (strain K84 / ATCC BAA-868) (Agrobacterium radiobacter).